Consider the following 512-residue polypeptide: Respiratory nitrate reductase 1 beta chain (512 aa).

3 4Fe-4S ferredoxin-type domains span residues 7 to 35 (VGMV…SREG), 175 to 206 (TFMM…KREE), and 208 to 237 (GIVL…FNWK). Positions 16, 19, 22, 26, 184, 187, and 192 each coordinate [4Fe-4S] cluster. Residues cysteine 196, cysteine 217, and cysteine 223 each coordinate [3Fe-4S] cluster. [4Fe-4S] cluster is bound by residues cysteine 227, cysteine 244, cysteine 247, cysteine 259, and cysteine 263.

As to quaternary structure, dimer of heterotrimers each composed of an alpha, a beta and a gamma chain. Alpha and beta are catalytic chains; gamma chains are involved in binding the enzyme complex to the cytoplasmic membrane. [4Fe-4S] cluster serves as cofactor. Requires [3Fe-4S] cluster as cofactor.

Its subcellular location is the cell membrane. The enzyme catalyses nitrate + a quinol = a quinone + nitrite + H2O. In terms of biological role, the nitrate reductase enzyme complex allows S.flexneri to use nitrate as an electron acceptor during anaerobic growth. The beta chain is an electron transfer unit containing four cysteine clusters involved in the formation of iron-sulfur centers. Electrons are transferred from the gamma chain to the molybdenum cofactor of the alpha subunit. This Shigella flexneri protein is Respiratory nitrate reductase 1 beta chain (narH).